The primary structure comprises 70 residues: DNA-directed RNA polymerase subunit omega (70 aa).

The protein belongs to the RNA polymerase subunit omega family. In terms of assembly, the RNAP catalytic core consists of 2 alpha, 1 beta, 1 beta' and 1 omega subunit. When a sigma factor is associated with the core the holoenzyme is formed, which can initiate transcription.

The catalysed reaction is RNA(n) + a ribonucleoside 5'-triphosphate = RNA(n+1) + diphosphate. In terms of biological role, promotes RNA polymerase assembly. Latches the N- and C-terminal regions of the beta' subunit thereby facilitating its interaction with the beta and alpha subunits. This chain is DNA-directed RNA polymerase subunit omega, found in Pelobacter propionicus (strain DSM 2379 / NBRC 103807 / OttBd1).